A 479-amino-acid chain; its full sequence is Poly(A) polymerase catalytic subunit (479 aa).

Catalysis depends on residues Asp202 and Asp204. Ca(2+) is bound by residues Asp202, Asp204, and Asp253.

Belongs to the poxviridae poly(A) polymerase catalytic subunit family. In terms of assembly, heterodimer of a large (catalytic) subunit and a small (regulatory) subunit.

It catalyses the reaction RNA(n) + ATP = RNA(n)-3'-adenine ribonucleotide + diphosphate. Polymerase that creates the 3'-poly(A) tail of mRNA's. The polypeptide is Poly(A) polymerase catalytic subunit (OPG063) (Cowpox virus (strain GRI-90 / Grishak) (CPV)).